The primary structure comprises 210 residues: Pyridoxine/pyridoxamine 5'-phosphate oxidase (210 aa).

Residues 7–10 (REDY) and Lys-65 each bind substrate. FMN-binding positions include 60 to 65 (RMVLLK), 75 to 76 (FT), Arg-81, Lys-82, and Gln-104. Substrate is bound by residues Tyr-122, Arg-126, and Ser-130. FMN-binding positions include 139–140 (QS) and Trp-183. 189–191 (RLH) contacts substrate. Arg-193 is a binding site for FMN.

It belongs to the pyridoxamine 5'-phosphate oxidase family. In terms of assembly, homodimer. The cofactor is FMN.

The enzyme catalyses pyridoxamine 5'-phosphate + O2 + H2O = pyridoxal 5'-phosphate + H2O2 + NH4(+). It carries out the reaction pyridoxine 5'-phosphate + O2 = pyridoxal 5'-phosphate + H2O2. Its pathway is cofactor metabolism; pyridoxal 5'-phosphate salvage; pyridoxal 5'-phosphate from pyridoxamine 5'-phosphate: step 1/1. It participates in cofactor metabolism; pyridoxal 5'-phosphate salvage; pyridoxal 5'-phosphate from pyridoxine 5'-phosphate: step 1/1. Catalyzes the oxidation of either pyridoxine 5'-phosphate (PNP) or pyridoxamine 5'-phosphate (PMP) into pyridoxal 5'-phosphate (PLP). The chain is Pyridoxine/pyridoxamine 5'-phosphate oxidase from Neisseria gonorrhoeae (strain ATCC 700825 / FA 1090).